Reading from the N-terminus, the 175-residue chain is D-glycero-beta-D-manno-heptose-1,7-bisphosphate 7-phosphatase (175 aa).

The Nucleophile role is filled by Asp7. Mg(2+) is bound by residues Asp7 and Asp9. Residues 7–9 (DRD), 15–19 (DSDAY), and 50–53 (TNQS) contribute to the substrate site. Catalysis depends on Asp9, which acts as the Proton donor. Zn(2+)-binding residues include Cys89, His91, Cys97, and Cys99. Substrate is bound at residue 100 to 101 (RK). Asp126 is a binding site for Mg(2+).

This sequence belongs to the gmhB family. Monomer. The cofactor is Mg(2+). It depends on Zn(2+) as a cofactor.

The protein resides in the cytoplasm. The enzyme catalyses D-glycero-beta-D-manno-heptose 1,7-bisphosphate + H2O = D-glycero-beta-D-manno-heptose 1-phosphate + phosphate. The protein operates within nucleotide-sugar biosynthesis; ADP-L-glycero-beta-D-manno-heptose biosynthesis; ADP-L-glycero-beta-D-manno-heptose from D-glycero-beta-D-manno-heptose 7-phosphate: step 2/4. Its pathway is bacterial outer membrane biogenesis; LPS core biosynthesis. Its function is as follows. Converts the D-glycero-beta-D-manno-heptose 1,7-bisphosphate (beta-HBP) intermediate into D-glycero-beta-D-manno-heptose 1-phosphate by removing the phosphate group at the C-7 position. This is D-glycero-beta-D-manno-heptose-1,7-bisphosphate 7-phosphatase from Pseudomonas putida (strain ATCC 47054 / DSM 6125 / CFBP 8728 / NCIMB 11950 / KT2440).